The following is a 409-amino-acid chain: Glucose-1-phosphate adenylyltransferase (409 aa).

Alpha-D-glucose 1-phosphate is bound by residues Gly-168, 183–184 (EK), and Ser-201.

It belongs to the bacterial/plant glucose-1-phosphate adenylyltransferase family. In terms of assembly, homotetramer.

The catalysed reaction is alpha-D-glucose 1-phosphate + ATP + H(+) = ADP-alpha-D-glucose + diphosphate. It functions in the pathway glycan biosynthesis; glycogen biosynthesis. Functionally, involved in the biosynthesis of ADP-glucose, a building block required for the elongation reactions to produce glycogen. Catalyzes the reaction between ATP and alpha-D-glucose 1-phosphate (G1P) to produce pyrophosphate and ADP-Glc. The polypeptide is Glucose-1-phosphate adenylyltransferase (Corynebacterium efficiens (strain DSM 44549 / YS-314 / AJ 12310 / JCM 11189 / NBRC 100395)).